The following is a 551-amino-acid chain: MLFSRSILRGMPKAGIPKSPLALSASRNLRLANSVRFASDAASSPKSTTSKWKILKRTTLGLFATAVVLYGANVYRFRHPDPHQPLPDPSKKTLVVLGAGWGATSILRTIDTSLFNVIVVSPRNYFLFTSLLPSTATGSVHTRSIVQPIRYMLRHKSCYVKFYEAECTDVDADKKVIHIKKTTTDGVDLEQEIKYDYLVCSHGAETQTFNIPGIAEYGCFLKEIWDAQKIRARILHCLEQAQFKDLPAETRRRYVHTVVVGGGPTGMEFAGEMADFIEDDLKSWYPELADDFAVTLVEALPSVLPMFSAKLRDYTQSLFDSSHIKIRTNTALKKVTAENIHVEVKNPDGSKQEEVIPYGLLVWAGGNRARPLTKKLMEGSEEQNNRRGLVVDEYLKLKGYKDIFALGDCTHTAYAPTAQVASQQGAYLGQLFNKLGSLNFEKPSEDRHIALGDEMDSSTLISLANEKHASTKVFLPFKYSHQGSLAYVGHEKAIADIEVPWFGKQLHASGALAFYFWRSVYLSELYSLRNRTNVTLDWIRVKLFGRDISSL.

A mitochondrion-targeting transit peptide spans 1 to 37; that stretch reads MLFSRSILRGMPKAGIPKSPLALSASRNLRLANSVRF. 93 to 123 is a binding site for FAD; the sequence is TLVVLGAGWGATSILRTIDTSLFNVIVVSPR. Residue 255-291 participates in NAD(+) binding; the sequence is VHTVVVGGGPTGMEFAGEMADFIEDDLKSWYPELADD.

It belongs to the NADH dehydrogenase family.

It is found in the mitochondrion. It carries out the reaction a quinone + NADH + H(+) = a quinol + NAD(+). It catalyses the reaction a ubiquinone + NADH + H(+) = a ubiquinol + NAD(+). Its function is as follows. Catalyzes the oxidation of NADH. This chain is Probable NADH-ubiquinone oxidoreductase C3A11.07, mitochondrial, found in Schizosaccharomyces pombe (strain 972 / ATCC 24843) (Fission yeast).